A 334-amino-acid chain; its full sequence is D-fructose 1,6-bisphosphatase class 2/sedoheptulose 1,7-bisphosphatase (334 aa).

Residues Asp33, Glu57, Asp85, and Glu88 each coordinate Mn(2+). Substrate is bound by residues Glu88 to Thr90, Tyr119, Arg164 to Arg166, and Asp186 to Asp188. Glu213 provides a ligand contact to Mn(2+).

This sequence belongs to the FBPase class 2 family. As to quaternary structure, homotetramer. Requires Mn(2+) as cofactor.

The enzyme catalyses beta-D-fructose 1,6-bisphosphate + H2O = beta-D-fructose 6-phosphate + phosphate. It carries out the reaction D-sedoheptulose 1,7-bisphosphate + H2O = D-sedoheptulose 7-phosphate + phosphate. The protein operates within carbohydrate biosynthesis; Calvin cycle. Functionally, catalyzes the hydrolysis of fructose 1,6-bisphosphate (Fru 1,6-P2) and sedoheptulose 1,7-bisphosphate (Sed 1,7-P2) to fructose 6-phosphate and sedoheptulose 7-phosphate, respectively. The polypeptide is D-fructose 1,6-bisphosphatase class 2/sedoheptulose 1,7-bisphosphatase (Synechococcus sp. (strain CC9605)).